Reading from the N-terminus, the 73-residue chain is MNYAGHKKLRADVAEVANTMCDLRARLNDMEHRCRFDSDVLVERLARQTLYRANRLFMEAYTEILELDACFKD.

This is an uncharacterized protein from Escherichia coli (strain K12).